The primary structure comprises 341 residues: LIM and senescent cell antigen-like-containing domain protein 2 (341 aa).

LIM zinc-binding domains are found at residues 13–74, 76–133, 138–195, 196–255, and 256–315; these read AMCQ…LFAP, CGFC…EKAK, FICQ…KMGI, PICG…LFGD, and VCYN…FPLE. The residue at position 328 (Ser-328) is a Phosphoserine.

As to quaternary structure, interacts with integrin-linked protein kinase 1 (ILK) via the first LIM domain, and in competition with LIMS1. Part of the heterotrimeric IPP complex composed of integrin-linked kinase (ILK), LIMS1 or LIMS2, and PARVA. Interacts with TGFB1I1. In terms of tissue distribution, detected in heart, lung, kidney, liver, urinary bladder, fat, skin, skeletal muscle, uterus, large intestine and testis.

The protein localises to the cell junction. The protein resides in the focal adhesion. It localises to the cell membrane. Functionally, adapter protein in a cytoplasmic complex linking beta-integrins to the actin cytoskeleton, bridges the complex to cell surface receptor tyrosine kinases and growth factor receptors. The polypeptide is LIM and senescent cell antigen-like-containing domain protein 2 (Lims2) (Mus musculus (Mouse)).